Consider the following 253-residue polypeptide: Phycoerythrobilin:ferredoxin oxidoreductase (253 aa).

It belongs to the HY2 family.

The enzyme catalyses (3Z)-phycoerythrobilin + oxidized 2[4Fe-4S]-[ferredoxin] = 15,16-dihydrobiliverdin + reduced 2[4Fe-4S]-[ferredoxin] + 2 H(+). Catalyzes the two-electron reduction of the C2 and C3(1) diene system of 15,16-dihydrobiliverdin. This chain is Phycoerythrobilin:ferredoxin oxidoreductase (pebB), found in Prochlorococcus marinus (strain MIT 9215).